A 348-amino-acid chain; its full sequence is Type II methyltransferase M.BglI (348 aa).

It belongs to the N(4)/N(6)-methyltransferase family.

The enzyme catalyses a 2'-deoxycytidine in DNA + S-adenosyl-L-methionine = an N(4)-methyl-2'-deoxycytidine in DNA + S-adenosyl-L-homocysteine + H(+). A beta subtype methylase, recognizes the double-stranded sequence 5'-GCCNNNNNGGC-3', methylates C-2 on both strands, and protects the DNA from cleavage by the BglI endonuclease. The protein is Type II methyltransferase M.BglI (bglIM) of Bacillus subtilis.